Here is a 174-residue protein sequence, read N- to C-terminus: Adenine phosphoribosyltransferase (174 aa).

Belongs to the purine/pyrimidine phosphoribosyltransferase family. Homodimer.

It is found in the cytoplasm. The catalysed reaction is AMP + diphosphate = 5-phospho-alpha-D-ribose 1-diphosphate + adenine. It functions in the pathway purine metabolism; AMP biosynthesis via salvage pathway; AMP from adenine: step 1/1. Its function is as follows. Catalyzes a salvage reaction resulting in the formation of AMP, that is energically less costly than de novo synthesis. This Photobacterium profundum (strain SS9) protein is Adenine phosphoribosyltransferase.